Consider the following 413-residue polypeptide: MNRWEKELDKYAELAVKVGVNIQPGQTLFVNAPLEAAPLVRKIAKTAYETGAKHVYFEWNDEALTYIKFHHAPEEAFSEYPMLRARAMEELAEQGAAFLSIHAPNPDLLKDVDPKRIATANKTAAQALANYRSAIMADRNCWSLISVPTPAWAQKVFGDLRDEEAIDKLWEAIFRITRIDQDDPIAAWREHNDRLARIVDYLNNKQYKQLVYEAPGPIFTVELVDGHVWHGGAATSQSGVRFNPNIPTEEVFTMPHKDGVNGTVRNTKPLNYNGNVIDGFTLTFKDGQVVDFSAEQGYETLKHLLDTDDGARRLGEVALVPHQSPVSLSNLIFYNTLFDENAACHLALGKAYPTNIENGASLSKEELDRRGVNDSLVHVDFMIGSADLNIDGVTKDGKREPIFRSGNWAFELA.

Residues E250, E316, E340, H345, H378, and D380 each coordinate a divalent metal cation.

The protein belongs to the peptidase M29 family. In terms of assembly, homodimer. Co(2+) serves as cofactor. Requires Zn(2+) as cofactor. The cofactor is Mg(2+).

Broad specificity metal-dependent exopeptidase, releasing all N-terminal amino acids. This Geobacillus stearothermophilus (Bacillus stearothermophilus) protein is Aminopeptidase 2.